A 351-amino-acid polypeptide reads, in one-letter code: Beta-1,4-xylosyltransferase IRX9 (351 aa).

Topologically, residues 1-16 (MGSLERSKKKAQVWKK) are cytoplasmic. A helical; Signal-anchor for type II membrane protein membrane pass occupies residues 17 to 36 (AVIHFSLCFVMGFFTGFAPA). Topologically, residues 37–351 (GKASFFSNFE…KFPTRTRLST (315 aa)) are lumenal. Residues N64 and N74 are each glycosylated (N-linked (GlcNAc...) asparagine). The disordered stretch occupies residues 80–107 (SQSQAPAPAESREAEGETRSLSEKEDEN). Residues 89 to 107 (ESREAEGETRSLSEKEDEN) show a composition bias toward basic and acidic residues. N-linked (GlcNAc...) asparagine glycosylation is found at N271 and N287.

Belongs to the glycosyltransferase 43 family. Expressed in developing interfascicular fibers, primary and secondary xylem in stems and developing secondary xylem in roots.

It is found in the golgi apparatus membrane. The enzyme catalyses [(1-&gt;4)-beta-D-xylan](n) + UDP-alpha-D-xylose = [(1-&gt;4)-beta-D-xylan](n+1) + UDP + H(+). Involved in the synthesis of the hemicellulose glucuronoxylan, a major component of secondary cell walls. Xylan xylosyltransferase that acts cooperatively with IRX14 to achieve the successive addition of xylosyl residues during xylan backbone elongation. The chain is Beta-1,4-xylosyltransferase IRX9 from Arabidopsis thaliana (Mouse-ear cress).